Here is a 498-residue protein sequence, read N- to C-terminus: ATP synthase subunit beta, chloroplastic (498 aa).

172–179 serves as a coordination point for ATP; that stretch reads GGAGVGKT.

This sequence belongs to the ATPase alpha/beta chains family. In terms of assembly, F-type ATPases have 2 components, CF(1) - the catalytic core - and CF(0) - the membrane proton channel. CF(1) has five subunits: alpha(3), beta(3), gamma(1), delta(1), epsilon(1). CF(0) has four main subunits: a(1), b(1), b'(1) and c(9-12).

The protein localises to the plastid. It localises to the chloroplast thylakoid membrane. It carries out the reaction ATP + H2O + 4 H(+)(in) = ADP + phosphate + 5 H(+)(out). In terms of biological role, produces ATP from ADP in the presence of a proton gradient across the membrane. The catalytic sites are hosted primarily by the beta subunits. The chain is ATP synthase subunit beta, chloroplastic from Populus alba (White poplar).